Reading from the N-terminus, the 311-residue chain is Phosphoglycerate mutase 2 (311 aa).

Substrate-binding positions include 16–23, 29–30, arginine 73, 126–129, lysine 137, 153–154, and 243–244; these read RHGQSELN, CG, ERHY, RR, and GS. Histidine 17 (tele-phosphohistidine intermediate) is an active-site residue. Glutamate 126 acts as the Proton donor/acceptor in catalysis.

The protein belongs to the phosphoglycerate mutase family. BPG-dependent PGAM subfamily.

It is found in the cytoplasm. It carries out the reaction (2R)-2-phosphoglycerate = (2R)-3-phosphoglycerate. Its pathway is carbohydrate degradation; glycolysis; pyruvate from D-glyceraldehyde 3-phosphate: step 3/5. In terms of biological role, could be non-functional. In Saccharomyces cerevisiae (strain ATCC 204508 / S288c) (Baker's yeast), this protein is Phosphoglycerate mutase 2 (GPM2).